The primary structure comprises 157 residues: Transcriptional repressor NrdR (157 aa).

Residues 3–34 (CPFCGHAESQVKDSRPSEDGAAIRRRRMCPEC) fold into a zinc finger. The 91-residue stretch at 49–139 (LIIVKRSGRR…VYRDFKETSD (91 aa)) folds into the ATP-cone domain.

The protein belongs to the NrdR family. Zn(2+) serves as cofactor.

Functionally, negatively regulates transcription of bacterial ribonucleotide reductase nrd genes and operons by binding to NrdR-boxes. This Caulobacter vibrioides (strain ATCC 19089 / CIP 103742 / CB 15) (Caulobacter crescentus) protein is Transcriptional repressor NrdR.